The sequence spans 300 residues: Dihydroorotate dehydrogenase B (NAD(+)), catalytic subunit (300 aa).

FMN is bound by residues Ser20 and 44–45 (KG). Residues Lys44 and 68–72 (NSVGL) contribute to the substrate site. FMN is bound by residues Asn98 and Asn124. Asn124 is a binding site for substrate. The Nucleophile role is filled by Cys127. FMN is bound by residues Lys162 and Ile188. 189 to 190 (NT) contacts substrate. Residues Gly214, 240–241 (GG), and 262–263 (GT) contribute to the FMN site.

This sequence belongs to the dihydroorotate dehydrogenase family. Type 1 subfamily. In terms of assembly, heterotetramer of 2 PyrK and 2 PyrD type B subunits. FMN is required as a cofactor.

Its subcellular location is the cytoplasm. The enzyme catalyses (S)-dihydroorotate + NAD(+) = orotate + NADH + H(+). It functions in the pathway pyrimidine metabolism; UMP biosynthesis via de novo pathway; orotate from (S)-dihydroorotate (NAD(+) route): step 1/1. In terms of biological role, catalyzes the conversion of dihydroorotate to orotate with NAD(+) as electron acceptor. This chain is Dihydroorotate dehydrogenase B (NAD(+)), catalytic subunit (pyrD), found in Caldicellulosiruptor saccharolyticus (strain ATCC 43494 / DSM 8903 / Tp8T 6331).